The sequence spans 157 residues: Small ribosomal subunit protein bS6 (157 aa).

Over residues H96–A151 the composition is skewed to basic and acidic residues. The disordered stretch occupies residues H96–E157.

The protein belongs to the bacterial ribosomal protein bS6 family.

Its function is as follows. Binds together with bS18 to 16S ribosomal RNA. This is Small ribosomal subunit protein bS6 from Rhodopseudomonas palustris (strain BisA53).